The chain runs to 57 residues: Protein new-glue 4 (57 aa).

The signal sequence occupies residues 1–16; that stretch reads MEWKLLLIVLPWLLVC.

It is found in the secreted. The sequence is that of Protein new-glue 4 (ng4) from Drosophila melanogaster (Fruit fly).